We begin with the raw amino-acid sequence, 363 residues long: Ribosomal RNA large subunit methyltransferase M (363 aa).

S-adenosyl-L-methionine contacts are provided by residues serine 190, 223 to 226, aspartate 242, aspartate 262, and aspartate 279; that span reads CPGG. Residue lysine 308 is the Proton acceptor of the active site.

It belongs to the class I-like SAM-binding methyltransferase superfamily. RNA methyltransferase RlmE family. RlmM subfamily. Monomer.

It is found in the cytoplasm. It catalyses the reaction cytidine(2498) in 23S rRNA + S-adenosyl-L-methionine = 2'-O-methylcytidine(2498) in 23S rRNA + S-adenosyl-L-homocysteine + H(+). Catalyzes the 2'-O-methylation at nucleotide C2498 in 23S rRNA. This Aliivibrio salmonicida (strain LFI1238) (Vibrio salmonicida (strain LFI1238)) protein is Ribosomal RNA large subunit methyltransferase M.